Consider the following 144-residue polypeptide: MPPKKKKLAGLIKLQIQAGQANPAPPVGPALGQHGVNIMEFCKAYNAATESQRGNVVPVEISVYEDRTFDFKLKTPPAAKLLLKAAGVQKGSGEPHKTKVASVTMDQVREIAKTKQEDLNANDIEQAAKIIAGTARSMGITVDG.

It belongs to the universal ribosomal protein uL11 family. As to quaternary structure, part of the ribosomal stalk of the 50S ribosomal subunit. Interacts with L10 and the large rRNA to form the base of the stalk. L10 forms an elongated spine to which L12 dimers bind in a sequential fashion forming a multimeric L10(L12)X complex. One or more lysine residues are methylated.

Its function is as follows. Forms part of the ribosomal stalk which helps the ribosome interact with GTP-bound translation factors. This is Large ribosomal subunit protein uL11 from Rhodococcus opacus (strain B4).